Here is a 1383-residue protein sequence, read N- to C-terminus: Spike glycoprotein (1383 aa).

Positions 1–25 are cleaved as a signal peptide; that stretch reads MRSLIYFWLLLPVLPTLSLPQDVTR. The S1 stretch occupies residues 26–734; it reads CQSTTNFRRF…TRELPGFFYH (709 aa). Over 26 to 1324 the chain is Virion surface; the sequence is CQSTTNFRRF…NRVETYIKWP (1299 aa). Positions 617–745 are interaction with host ANPEP; sequence FQFTKGELIT…NDGSNCTEPV (129 aa). An S2 region spans residues 735-1383; the sequence is SNDGSNCTEP…YEAFEKVHVQ (649 aa). A fusion peptide region spans residues 955–975; sequence IGGMALGGITAAAALPFSYAV. Residues 969 to 1088 form a heptad repeat 1 (HR1) region; the sequence is LPFSYAVQAR…QVDRLITGRL (120 aa). Coiled coils occupy residues 1036–1080 and 1272–1314; these read QEVV…DVQV and TYLN…LEWL. Residues 1240–1336 are heptad repeat 2 (HR2); sequence PDYIDVNKTL…VWLIIVIVLI (97 aa). A helical membrane pass occupies residues 1325–1344; that stretch reads WWVWLIIVIVLIFVVSLLVF. Topologically, residues 1345-1383 are intravirion; the sequence is CCISTGCCGCCGCCGACFSGCCRGPRLQPYEAFEKVHVQ. The KxHxx motif lies at 1379–1383; that stretch reads KVHVQ.

This sequence belongs to the alphacoronaviruses spike protein family. Homotrimer. During virus morphogenesis, found in a complex with M and HE proteins. Interacts with host ANPEP.

The protein resides in the virion membrane. Its subcellular location is the host endoplasmic reticulum-Golgi intermediate compartment membrane. S1 region attaches the virion to the cell membrane by interacting with host ANPEP/aminopeptidase N, initiating the infection. Binding to the receptor probably induces conformational changes in the S glycoprotein unmasking the fusion peptide of S2 region and activating membranes fusion. S2 region belongs to the class I viral fusion protein. Under the current model, the protein has at least 3 conformational states: pre-fusion native state, pre-hairpin intermediate state, and post-fusion hairpin state. During viral and target cell membrane fusion, the coiled coil regions (heptad repeats) regions assume a trimer-of-hairpins structure, positioning the fusion peptide in close proximity to the C-terminal region of the ectodomain. The formation of this structure appears to drive apposition and subsequent fusion of viral and target cell membranes. In Porcine epidemic diarrhea virus (strain CV777) (PEDV), this protein is Spike glycoprotein.